Consider the following 290-residue polypeptide: Glycine--tRNA ligase alpha subunit (290 aa).

This sequence belongs to the class-II aminoacyl-tRNA synthetase family. In terms of assembly, tetramer of two alpha and two beta subunits.

Its subcellular location is the cytoplasm. The catalysed reaction is tRNA(Gly) + glycine + ATP = glycyl-tRNA(Gly) + AMP + diphosphate. This Desulfotalea psychrophila (strain LSv54 / DSM 12343) protein is Glycine--tRNA ligase alpha subunit.